Here is a 317-residue protein sequence, read N- to C-terminus: Protoheme IX farnesyltransferase (317 aa).

Helical transmembrane passes span 25 to 45 (FFAL…LVGM), 54 to 74 (PVIA…SGCL), 126 to 146 (LAAG…SMWL), 154 to 174 (IVIG…VVTG), 181 to 201 (LVLF…LALV), 227 to 244 (IVAY…PVAL), 249 to 271 (LIYG…QVYH), and 281 to 301 (AAMG…SALL).

Belongs to the UbiA prenyltransferase family. Protoheme IX farnesyltransferase subfamily.

The protein localises to the cell inner membrane. It catalyses the reaction heme b + (2E,6E)-farnesyl diphosphate + H2O = Fe(II)-heme o + diphosphate. The protein operates within porphyrin-containing compound metabolism; heme O biosynthesis; heme O from protoheme: step 1/1. Converts heme B (protoheme IX) to heme O by substitution of the vinyl group on carbon 2 of heme B porphyrin ring with a hydroxyethyl farnesyl side group. The sequence is that of Protoheme IX farnesyltransferase from Methylobacterium sp. (strain 4-46).